We begin with the raw amino-acid sequence, 203 residues long: MAEGQVLVLDGRGHLLGRLAAIVAKQVLLGRKVVVVRCEGINISGNFYRNKLKYLAFLRKRMNTNPSRGPYHFRAPSRIFWRTVRGMLPHKTKRGQAALERLKVLDGIPPPYDKKKRMVVPAALKVVRLKPTRKFAYLGRLAHEVGWKYQAVTATLEEKRKEKAKMHYRKKKQILRLRKQAEKNVEKKICKFTEVLKTNGLLV.

The residue at position 2 (alanine 2) is an N-acetylalanine. Residue arginine 59 is modified to Citrulline. Phosphoserine; by ZIPK/DAPK3 is present on serine 77. Arginine 140 carries the post-translational modification Citrulline. Lysine 191 is modified (N6-acetyllysine).

It belongs to the universal ribosomal protein uL13 family. In terms of assembly, component of the 60S ribosome. Component of the GAIT complex. Interacts with EIF4G1. Post-translationally, phosphorylation at Ser-77 upon interferon-gamma treatment in macrophages involves a DAPK1-DAPK3 kinase cascade and is causing release from the ribosome, association with the GAIT complex and subsequent involvement in transcript-selective translation inhibition. In terms of processing, citrullinated by PADI4.

The protein resides in the cytoplasm. Its function is as follows. Associated with ribosomes but is not required for canonical ribosome function and has extra-ribosomal functions. Component of the GAIT (gamma interferon-activated inhibitor of translation) complex which mediates interferon-gamma-induced transcript-selective translation inhibition in inflammation processes. Upon interferon-gamma activation and subsequent phosphorylation dissociates from the ribosome and assembles into the GAIT complex which binds to stem loop-containing GAIT elements in the 3'-UTR of diverse inflammatory mRNAs (such as ceruplasmin) and suppresses their translation. In the GAIT complex interacts with m7G cap-bound eIF4G at or near the eIF3-binding site and blocks the recruitment of the 43S ribosomal complex. Involved in methylation of rRNA. This Mus musculus (Mouse) protein is Large ribosomal subunit protein uL13 (Rpl13a).